Reading from the N-terminus, the 441-residue chain is Arginine biosynthesis bifunctional protein ArgJ, mitochondrial (441 aa).

The transit peptide at 1 to 8 (MRISSTLL) directs the protein to the mitochondrion. 6 residues coordinate substrate: Thr177, Lys204, Thr215, Glu301, Asn436, and Ser441. The active-site Nucleophile is the Thr215.

It belongs to the ArgJ family. Heterodimer of an alpha and a beta chain. Post-translationally, the alpha and beta chains are autoproteolytically processed from a single precursor protein within the mitochondrion.

It localises to the mitochondrion matrix. It carries out the reaction N(2)-acetyl-L-ornithine + L-glutamate = N-acetyl-L-glutamate + L-ornithine. The catalysed reaction is L-glutamate + acetyl-CoA = N-acetyl-L-glutamate + CoA + H(+). It functions in the pathway amino-acid biosynthesis; L-arginine biosynthesis; L-ornithine and N-acetyl-L-glutamate from L-glutamate and N(2)-acetyl-L-ornithine (cyclic): step 1/1. The protein operates within amino-acid biosynthesis; L-arginine biosynthesis; N(2)-acetyl-L-ornithine from L-glutamate: step 1/4. Functionally, catalyzes two activities which are involved in the cyclic version of arginine biosynthesis: the synthesis of acetylglutamate from glutamate and acetyl-CoA, and of ornithine by transacetylation between acetylornithine and glutamate. The sequence is that of Arginine biosynthesis bifunctional protein ArgJ, mitochondrial from Saccharomyces cerevisiae (strain Lalvin EC1118 / Prise de mousse) (Baker's yeast).